We begin with the raw amino-acid sequence, 1004 residues long: Sal-like protein 2 (1004 aa).

5 disordered regions span residues 1 to 33, 51 to 122, 137 to 177, 220 to 270, and 285 to 307; these read MSRR…EDHP, AHQN…EESS, GGGL…SGHL, PASP…EPPK, and PFSV…ALPG. The segment at 34 to 56 adopts a C2H2-type 1; atypical zinc-finger fold; it reads QVCAKCCAQFSDPTEFLAHQNSC. Over residues 71-81 the composition is skewed to low complexity; it reads NPSNSSASSAP. Residues 83–98 are compositionally biased toward basic and acidic residues; it reads PEGHSRSQVMDTEHSN. The span at 99 to 110 shows a compositional bias: low complexity; the sequence is PPDSGSSGAPDP. Pro residues predominate over residues 151–171; sequence PLPPESTPAPPPPPPPPPPPG. Ser243 is modified (phosphoserine). 5 consecutive C2H2-type zinc fingers follow at residues 372–394, 400–422, 629–651, 657–679, and 689–711; these read HKCR…LRSH, YKCN…FHRH, NQCV…YGQH, FKCK…FVGH, and NSCP…VRMH. The tract at residues 712 to 910 is disordered; the sequence is LGGQIPNGGS…PGESSGRKAC (199 aa). Polar residues predominate over residues 731–742; it reads QENSSEQSTASG. Positions 756–779 are enriched in acidic residues; it reads PEEEMSEEEEEDEEEEEDVTDEDS. Ser794, Ser799, and Ser803 each carry phosphoserine. Residues 800-809 show a composition bias toward acidic residues; sequence EEVSGAEEEV. Positions 810–819 are enriched in low complexity; it reads ATSVAAPTTV. Residues 820–829 show a composition bias toward basic and acidic residues; it reads KEMDSNEKAP. Pro residues predominate over residues 832–841; it reads TLPPPPPPPD. Positions 896 to 910 are enriched in basic and acidic residues; sequence AMKKDPGESSGRKAC. A Glycyl lysine isopeptide (Lys-Gly) (interchain with G-Cter in ubiquitin) cross-link involves residue Lys908. 2 C2H2-type zinc fingers span residues 908-930 and 937-961; these read KACE…QKTH and FTCV…LAHH.

Belongs to the sal C2H2-type zinc-finger protein family. As to expression, expressed throughout embryonic development. In adult predominantly in brain.

The protein resides in the nucleus. Functionally, probable transcription factor that plays a role in eye development before, during, and after optic fissure closure. This chain is Sal-like protein 2 (Sall2), found in Mus musculus (Mouse).